A 127-amino-acid polypeptide reads, in one-letter code: Putative B3 domain-containing protein At4g12617 (127 aa).

Residues Ile35–Ala127 constitute a DNA-binding region (TF-B3).

The protein resides in the nucleus. The sequence is that of Putative B3 domain-containing protein At4g12617 from Arabidopsis thaliana (Mouse-ear cress).